A 177-amino-acid chain; its full sequence is Phycocyanin-645 beta chain (177 aa).

Mesobiliverdin is bound at residue Tyr-18. Residues Lys-28, Asn-35, and Asp-39 each coordinate (2R,3E)-phycocyanobilin. 15,16-dihydrobiliverdin is bound by residues Cys-50, Asp-54, and Cys-61. Arg-77, Cys-82, Arg-84, and Asp-85 together coordinate (2R,3E)-phycocyanobilin. Gln-148 lines the 15,16-dihydrobiliverdin pocket. (2R,3E)-phycocyanobilin contacts are provided by Pro-154, Gly-156, and Cys-158.

Belongs to the phycobiliprotein family. Heterotetramer of 2 different alpha chains and 2 identical beta chains which form 2 alpha-beta heterodimers within the heterotetramer. Contains two phycocyanobilin chromophores, one mesobiliverdin chromophore and one 15,16-dihydrobiliverdin chromophore with binding mediated by both the alpha and beta subunits.

Its subcellular location is the plastid. It localises to the chloroplast thylakoid membrane. In terms of biological role, light-harvesting photosynthetic tetrapyrrole chromophore-protein from the phycobiliprotein complex. The protein is Phycocyanin-645 beta chain of Chroomonas sp.